Consider the following 428-residue polypeptide: S-adenosylmethionine synthase (428 aa).

His14 contacts ATP. Asp16 serves as a coordination point for Mg(2+). Position 42 (Glu42) interacts with K(+). Residues Glu55 and Gln98 each coordinate L-methionine. The tract at residues Gln98–Arg108 is flexible loop. ATP-binding positions include Asp165–Lys167, Lys251–Phe252, Asp260, Arg266–Lys267, Ala283, and Lys287. L-methionine is bound at residue Asp260. Lys291 is a binding site for L-methionine.

It belongs to the AdoMet synthase family. Homotetramer; dimer of dimers. It depends on Mg(2+) as a cofactor. K(+) is required as a cofactor.

It localises to the cytoplasm. The enzyme catalyses L-methionine + ATP + H2O = S-adenosyl-L-methionine + phosphate + diphosphate. It participates in amino-acid biosynthesis; S-adenosyl-L-methionine biosynthesis; S-adenosyl-L-methionine from L-methionine: step 1/1. Its function is as follows. Catalyzes the formation of S-adenosylmethionine (AdoMet) from methionine and ATP. The overall synthetic reaction is composed of two sequential steps, AdoMet formation and the subsequent tripolyphosphate hydrolysis which occurs prior to release of AdoMet from the enzyme. The polypeptide is S-adenosylmethionine synthase (Parabacteroides distasonis (strain ATCC 8503 / DSM 20701 / CIP 104284 / JCM 5825 / NCTC 11152)).